Consider the following 423-residue polypeptide: Kynureninase (423 aa).

Pyridoxal 5'-phosphate-binding positions include leucine 105, serine 106, 133–136 (FPSD), aspartate 218, histidine 221, and tyrosine 243. Position 244 is an N6-(pyridoxal phosphate)lysine (lysine 244). Residues tryptophan 273 and asparagine 301 each coordinate pyridoxal 5'-phosphate.

Belongs to the kynureninase family. As to quaternary structure, homodimer. Pyridoxal 5'-phosphate serves as cofactor.

It catalyses the reaction L-kynurenine + H2O = anthranilate + L-alanine + H(+). The enzyme catalyses 3-hydroxy-L-kynurenine + H2O = 3-hydroxyanthranilate + L-alanine + H(+). It functions in the pathway amino-acid degradation; L-kynurenine degradation; L-alanine and anthranilate from L-kynurenine: step 1/1. The protein operates within cofactor biosynthesis; NAD(+) biosynthesis; quinolinate from L-kynurenine: step 2/3. In terms of biological role, catalyzes the cleavage of L-kynurenine (L-Kyn) and L-3-hydroxykynurenine (L-3OHKyn) into anthranilic acid (AA) and 3-hydroxyanthranilic acid (3-OHAA), respectively. The chain is Kynureninase from Xanthomonas oryzae pv. oryzae (strain MAFF 311018).